The primary structure comprises 261 residues: Indole-3-glycerol phosphate synthase (261 aa).

The protein belongs to the TrpC family.

The enzyme catalyses 1-(2-carboxyphenylamino)-1-deoxy-D-ribulose 5-phosphate + H(+) = (1S,2R)-1-C-(indol-3-yl)glycerol 3-phosphate + CO2 + H2O. It functions in the pathway amino-acid biosynthesis; L-tryptophan biosynthesis; L-tryptophan from chorismate: step 4/5. The polypeptide is Indole-3-glycerol phosphate synthase (Campylobacter concisus (strain 13826)).